A 279-amino-acid chain; its full sequence is Alcohol dehydrogenase-related 31 kDa protein (279 aa).

Residue 11 to 34 (YVADCGGIALETSKVLMTKNIAKL) coordinates NAD(+). Residue Ser139 participates in substrate binding. The Proton acceptor role is filled by Tyr152.

Belongs to the short-chain dehydrogenases/reductases (SDR) family.

The sequence is that of Alcohol dehydrogenase-related 31 kDa protein (Adhr) from Drosophila subobscura (Fruit fly).